The sequence spans 325 residues: ATPase GET3 (325 aa).

34-41 is a binding site for ATP; sequence KGGVGKTT. The active site involves Asp-63. ATP contacts are provided by Glu-243 and Asn-270. Cys-281 and Cys-284 together coordinate Zn(2+).

It belongs to the arsA ATPase family. Homodimer.

Its subcellular location is the cytoplasm. It localises to the endoplasmic reticulum. ATPase required for the post-translational delivery of tail-anchored (TA) proteins to the endoplasmic reticulum. Recognizes and selectively binds the transmembrane domain of TA proteins in the cytosol. This complex then targets to the endoplasmic reticulum by membrane-bound receptors, where the tail-anchored protein is released for insertion. This process is regulated by ATP binding and hydrolysis. ATP binding drives the homodimer towards the closed dimer state, facilitating recognition of newly synthesized TA membrane proteins. ATP hydrolysis is required for insertion. Subsequently, the homodimer reverts towards the open dimer state, lowering its affinity for the membrane-bound receptor, and returning it to the cytosol to initiate a new round of targeting. This chain is ATPase GET3, found in Coccidioides posadasii (strain C735) (Valley fever fungus).